The chain runs to 166 residues: Protein-export protein SecB (166 aa).

Belongs to the SecB family. In terms of assembly, homotetramer, a dimer of dimers. One homotetramer interacts with 1 SecA dimer.

The protein localises to the cytoplasm. Its function is as follows. One of the proteins required for the normal export of preproteins out of the cell cytoplasm. It is a molecular chaperone that binds to a subset of precursor proteins, maintaining them in a translocation-competent state. It also specifically binds to its receptor SecA. This Sinorhizobium fredii (strain NBRC 101917 / NGR234) protein is Protein-export protein SecB.